A 294-amino-acid chain; its full sequence is MSDYLVKALAYDGMARVYAAVTTETIKEAQRRHDTWSVSSAALGRTMTGTLFLGAMQKEDQKITVKIEGDGPIGPIVADSNAQGQIRGYVTNPHVHFSELNEAGKLDVRRGVGTSGMLSVVKDLGFGENFTGQTPIVSGEIGEDFTYYLATSEQINSSVGVGVLVNPDDTIEAAGGFMLQLLPGATDEIIDEIEKNLMALPTVSRMIEAGETPESILAKLAGGEDKLQILEKIPVSFECNCSKERFGSAIISLGKEEIRSMIEEDHGAEAECHFCRNTYDFSEEELKTLYEEAK.

2 disulfides stabilise this stretch: Cys-239–Cys-241 and Cys-272–Cys-275.

Belongs to the HSP33 family. Post-translationally, under oxidizing conditions two disulfide bonds are formed involving the reactive cysteines. Under reducing conditions zinc is bound to the reactive cysteines and the protein is inactive.

Its subcellular location is the cytoplasm. Redox regulated molecular chaperone. Protects both thermally unfolding and oxidatively damaged proteins from irreversible aggregation. Plays an important role in the bacterial defense system toward oxidative stress. The protein is 33 kDa chaperonin of Listeria monocytogenes serovar 1/2a (strain ATCC BAA-679 / EGD-e).